Consider the following 430-residue polypeptide: CinA-like protein (430 aa).

Belongs to the CinA family.

This is CinA-like protein from Mycobacterium tuberculosis (strain ATCC 25177 / H37Ra).